A 342-amino-acid chain; its full sequence is tRNA N6-adenosine threonylcarbamoyltransferase (342 aa).

Residues His-111 and His-115 each contribute to the Fe cation site. Residues 134 to 138 (LVSGG), Asp-167, Gly-180, and Asn-275 each bind substrate. Residue Asp-303 participates in Fe cation binding.

Belongs to the KAE1 / TsaD family. Fe(2+) is required as a cofactor.

Its subcellular location is the cytoplasm. It catalyses the reaction L-threonylcarbamoyladenylate + adenosine(37) in tRNA = N(6)-L-threonylcarbamoyladenosine(37) in tRNA + AMP + H(+). In terms of biological role, required for the formation of a threonylcarbamoyl group on adenosine at position 37 (t(6)A37) in tRNAs that read codons beginning with adenine. Is involved in the transfer of the threonylcarbamoyl moiety of threonylcarbamoyl-AMP (TC-AMP) to the N6 group of A37, together with TsaE and TsaB. TsaD likely plays a direct catalytic role in this reaction. This Paraburkholderia xenovorans (strain LB400) protein is tRNA N6-adenosine threonylcarbamoyltransferase.